The chain runs to 282 residues: tRNA pseudouridine synthase B (282 aa).

The active-site Nucleophile is the aspartate 39.

Belongs to the pseudouridine synthase TruB family. Type 1 subfamily.

It catalyses the reaction uridine(55) in tRNA = pseudouridine(55) in tRNA. Its function is as follows. Responsible for synthesis of pseudouridine from uracil-55 in the psi GC loop of transfer RNAs. This chain is tRNA pseudouridine synthase B, found in Borrelia garinii subsp. bavariensis (strain ATCC BAA-2496 / DSM 23469 / PBi) (Borreliella bavariensis).